We begin with the raw amino-acid sequence, 214 residues long: Thiopurine S-methyltransferase (214 aa).

Tryptophan 10, leucine 44, glutamate 65, and arginine 122 together coordinate S-adenosyl-L-methionine.

It belongs to the class I-like SAM-binding methyltransferase superfamily. TPMT family.

The protein resides in the cytoplasm. It carries out the reaction S-adenosyl-L-methionine + a thiopurine = S-adenosyl-L-homocysteine + a thiopurine S-methylether.. This Teredinibacter turnerae (strain ATCC 39867 / T7901) protein is Thiopurine S-methyltransferase.